The following is a 389-amino-acid chain: Chalcone synthase 9 (389 aa).

Cysteine 164 is a catalytic residue.

It belongs to the thiolase-like superfamily. Chalcone/stilbene synthases family.

The enzyme catalyses (E)-4-coumaroyl-CoA + 3 malonyl-CoA + 3 H(+) = 2',4,4',6'-tetrahydroxychalcone + 3 CO2 + 4 CoA. Its pathway is secondary metabolite biosynthesis; flavonoid biosynthesis. In terms of biological role, the primary product of this enzyme is 4,2',4',6'-tetrahydroxychalcone (also termed naringenin-chalcone or chalcone) which can under specific conditions spontaneously isomerize into naringenin. This chain is Chalcone synthase 9 (CHS9), found in Daucus carota (Wild carrot).